A 341-amino-acid polypeptide reads, in one-letter code: ATP-dependent 6-phosphofructokinase 3 (341 aa).

ATP contacts are provided by residues G10, 72 to 73 (RV), and 102 to 105 (GEGT). E103 contacts Mg(2+). Substrate-binding positions include 125-127 (TID), R162, 169-171 (MGR), E222, R266, and 272-275 (HVQR). Catalysis depends on D127, which acts as the Proton acceptor.

It belongs to the phosphofructokinase type A (PFKA) family. Mixed-substrate PFK group III subfamily. Homodimer or homotetramer. The cofactor is Mg(2+).

The protein localises to the cytoplasm. It catalyses the reaction beta-D-fructose 6-phosphate + ATP = beta-D-fructose 1,6-bisphosphate + ADP + H(+). It participates in carbohydrate degradation; glycolysis; D-glyceraldehyde 3-phosphate and glycerone phosphate from D-glucose: step 3/4. Its function is as follows. Catalyzes the phosphorylation of D-fructose 6-phosphate to fructose 1,6-bisphosphate by ATP, the first committing step of glycolysis. This Streptomyces coelicolor (strain ATCC BAA-471 / A3(2) / M145) protein is ATP-dependent 6-phosphofructokinase 3.